The following is a 181-amino-acid chain: Oligoribonuclease (181 aa).

The Exonuclease domain occupies 8-171 (LIWIDLEMTG…DDIRESVAEL (164 aa)). Tyr-129 is an active-site residue.

This sequence belongs to the oligoribonuclease family.

The protein localises to the cytoplasm. In terms of biological role, 3'-to-5' exoribonuclease specific for small oligoribonucleotides. This is Oligoribonuclease from Salmonella choleraesuis (strain SC-B67).